Consider the following 644-residue polypeptide: uncharacterized protein (644 aa).

The chain crosses the membrane as a helical span at residues 16–38 (LLSYLGVVGVGIAGLCIYRSVWG). The segment covering 586–603 (VRQLQKEAGEGEAEEHPR) has biased composition (basic and acidic residues). The interval 586–613 (VRQLQKEAGEGEAEEHPRARPAAGKAQR) is disordered.

Its subcellular location is the membrane. This is an uncharacterized protein from Treponema pallidum (strain Nichols).